The primary structure comprises 711 residues: Polyribonucleotide nucleotidyltransferase (711 aa).

Asp-486 and Asp-492 together coordinate Mg(2+). The 60-residue stretch at 553-612 folds into the KH domain; the sequence is PRIHTIKINPDKIKDVIGKGGSVIRALTEETGTTIEIEDDGTVKIAATDGEKAKHAIRRI. Residues 622–690 form the S1 motif domain; it reads GRVYNGKVTR…RQGRIRLSIK (69 aa). The interval 690-711 is disordered; the sequence is KEATEQSQPAAALEAPAAEQGE. Positions 698–711 are enriched in low complexity; that stretch reads PAAALEAPAAEQGE.

This sequence belongs to the polyribonucleotide nucleotidyltransferase family. As to quaternary structure, component of the RNA degradosome, which is a multiprotein complex involved in RNA processing and mRNA degradation. The cofactor is Mg(2+).

The protein resides in the cytoplasm. The catalysed reaction is RNA(n+1) + phosphate = RNA(n) + a ribonucleoside 5'-diphosphate. In terms of biological role, involved in mRNA degradation. Catalyzes the phosphorolysis of single-stranded polyribonucleotides processively in the 3'- to 5'-direction. In Escherichia coli O127:H6 (strain E2348/69 / EPEC), this protein is Polyribonucleotide nucleotidyltransferase.